The chain runs to 37 residues: Large ribosomal subunit protein bL36 (37 aa).

Belongs to the bacterial ribosomal protein bL36 family.

The protein is Large ribosomal subunit protein bL36 of Rippkaea orientalis (strain PCC 8801 / RF-1) (Cyanothece sp. (strain PCC 8801)).